The chain runs to 227 residues: E3 ubiquitin-protein ligase ZNRF1 (227 aa).

The tract at residues 1 to 42 (MGGKQSTAARSRGPFPGVSTDDSAVPPPGGAPHFGHYRTGGG) is disordered. Gly-2 carries the N-myristoyl glycine lipid modification. A required for endosomal and lysosomal localization and myristoylation region spans residues 2–10 (GGKQSTAAR). A phosphoserine mark is found at Ser-50, Ser-52, and Ser-53. Residues 65–105 (GGVPFSLYTPASRGTGDSERAPGGGGSTSDSTYAHGNGYQE) are disordered. Residue Tyr-103 is modified to Phosphotyrosine. Phosphoserine is present on Ser-123. An RING-type; atypical zinc finger spans residues 184-225 (CVICLEELLQGDTIARLPCLCIYHKSCIDSWFEVNRSCPEHP).

In terms of assembly, interacts with AKT1, GLUL and TUBB2A. Interacts with ZNRF2. Interacts (via its RING domain) with UBE2N. Interacts (when phosphorylated) with YWHAE. N-myristoylation targets ZNRF1 to intracellular membranes. In terms of processing, phosphorylated by SRC at Tyr-103; leading to 'Lys-63'-linked ubiquitination of TLR3, lysosomal trafficking and degradation.

It localises to the endosome. Its subcellular location is the lysosome. The protein resides in the membrane. The protein localises to the cytoplasmic vesicle. It is found in the secretory vesicle. It localises to the synaptic vesicle membrane. The enzyme catalyses S-ubiquitinyl-[E2 ubiquitin-conjugating enzyme]-L-cysteine + [acceptor protein]-L-lysine = [E2 ubiquitin-conjugating enzyme]-L-cysteine + N(6)-ubiquitinyl-[acceptor protein]-L-lysine.. It functions in the pathway protein modification; protein ubiquitination. In terms of biological role, E3 ubiquitin-protein ligase that plays a role in different processes including cell differentiation, receptor recycling or regulation of inflammation. Mediates the ubiquitination of AKT1 and GLUL, thereby playing a role in neuron cells differentiation. Plays a role in the establishment and maintenance of neuronal transmission and plasticity. Regulates Schwann cells differentiation by mediating ubiquitination of GLUL. Promotes neurodegeneration by mediating 'Lys-48'-linked polyubiquitination and subsequent degradation of AKT1 in axons: degradation of AKT1 prevents AKT1-mediated phosphorylation of GSK3B, leading to GSK3B activation and phosphorylation of DPYSL2/CRMP2 followed by destabilization of microtubule assembly in axons. Ubiquitinates the Na(+)/K(+) ATPase alpha-1 subunit/ATP1A1 and thereby influences its endocytosis and/or degradation. Controls ligand-induced EGFR signaling via mediating receptor ubiquitination and recruitment of the ESCRT machinery. Acts as a negative feedback mechanism controlling TLR3 trafficking by mediating TLR3 'Lys-63'-linked polyubiquitination to reduce type I IFN production. Modulates inflammation by promoting caveolin-1/CAV1 ubiquitination and degradation to regulate TLR4-activated immune response. The chain is E3 ubiquitin-protein ligase ZNRF1 (Znrf1) from Mus musculus (Mouse).